The following is a 130-amino-acid chain: Small ribosomal subunit protein uS11 (130 aa).

The protein belongs to the universal ribosomal protein uS11 family. Part of the 30S ribosomal subunit. Interacts with proteins S7 and S18. Binds to IF-3.

Its function is as follows. Located on the platform of the 30S subunit, it bridges several disparate RNA helices of the 16S rRNA. Forms part of the Shine-Dalgarno cleft in the 70S ribosome. In Prochlorococcus marinus (strain MIT 9515), this protein is Small ribosomal subunit protein uS11.